The chain runs to 667 residues: DNA ligase (667 aa).

NAD(+) contacts are provided by residues 30 to 34 (DSEYD), 79 to 80 (SL), and glutamate 112. Residue lysine 114 is the N6-AMP-lysine intermediate of the active site. NAD(+) contacts are provided by arginine 135, glutamate 172, lysine 289, and lysine 313. Zn(2+) is bound by residues cysteine 407, cysteine 410, cysteine 425, and cysteine 431. The region spanning 590–667 (VRDNPLKGKT…SENEFLALLA (78 aa)) is the BRCT domain.

Belongs to the NAD-dependent DNA ligase family. LigA subfamily. Requires Mg(2+) as cofactor. The cofactor is Mn(2+).

The enzyme catalyses NAD(+) + (deoxyribonucleotide)n-3'-hydroxyl + 5'-phospho-(deoxyribonucleotide)m = (deoxyribonucleotide)n+m + AMP + beta-nicotinamide D-nucleotide.. Functionally, DNA ligase that catalyzes the formation of phosphodiester linkages between 5'-phosphoryl and 3'-hydroxyl groups in double-stranded DNA using NAD as a coenzyme and as the energy source for the reaction. It is essential for DNA replication and repair of damaged DNA. This is DNA ligase from Histophilus somni (strain 2336) (Haemophilus somnus).